Consider the following 284-residue polypeptide: 2-dehydro-3-deoxyphosphooctonate aldolase (284 aa).

This sequence belongs to the KdsA family.

It is found in the cytoplasm. It catalyses the reaction D-arabinose 5-phosphate + phosphoenolpyruvate + H2O = 3-deoxy-alpha-D-manno-2-octulosonate-8-phosphate + phosphate. Its pathway is carbohydrate biosynthesis; 3-deoxy-D-manno-octulosonate biosynthesis; 3-deoxy-D-manno-octulosonate from D-ribulose 5-phosphate: step 2/3. The protein operates within bacterial outer membrane biogenesis; lipopolysaccharide biosynthesis. The sequence is that of 2-dehydro-3-deoxyphosphooctonate aldolase from Escherichia fergusonii (strain ATCC 35469 / DSM 13698 / CCUG 18766 / IAM 14443 / JCM 21226 / LMG 7866 / NBRC 102419 / NCTC 12128 / CDC 0568-73).